A 458-amino-acid chain; its full sequence is Succinate-semialdehyde dehydrogenase [NADP(+)] 1 (458 aa).

Residues 134–135, 158–161, and 210–211 contribute to the NADP(+) site; these read WN, KHAS, and GS. E232 serves as the catalytic Proton acceptor. L233 serves as a coordination point for NADP(+). The active-site Nucleophile is the C266. NADP(+) is bound at residue E363.

This sequence belongs to the aldehyde dehydrogenase family.

It carries out the reaction succinate semialdehyde + NADP(+) + H2O = succinate + NADPH + 2 H(+). Functionally, catalyzes the NADP(+)-dependent oxidation of succinate semialdehyde to succinate. It is believed to be the main source of succinate semialdehyde dehydrogenase activity in Mycobacterium. This Mycobacterium ulcerans (strain Agy99) protein is Succinate-semialdehyde dehydrogenase [NADP(+)] 1 (gabD1).